A 948-amino-acid chain; its full sequence is Alanine--tRNA ligase (948 aa).

Zn(2+)-binding residues include His638, His642, Cys739, and His743.

It belongs to the class-II aminoacyl-tRNA synthetase family. Zn(2+) is required as a cofactor.

It is found in the cytoplasm. It catalyses the reaction tRNA(Ala) + L-alanine + ATP = L-alanyl-tRNA(Ala) + AMP + diphosphate. In terms of biological role, catalyzes the attachment of alanine to tRNA(Ala) in a two-step reaction: alanine is first activated by ATP to form Ala-AMP and then transferred to the acceptor end of tRNA(Ala). Also edits incorrectly charged Ser-tRNA(Ala) and Gly-tRNA(Ala) via its editing domain. The chain is Alanine--tRNA ligase from Paracidovorax citrulli (strain AAC00-1) (Acidovorax citrulli).